We begin with the raw amino-acid sequence, 171 residues long: Cyclin-dependent kinase inhibitor 2A (171 aa).

The segment covering Ala-33–Glu-42 has biased composition (basic and acidic residues). The interval Ala-33–Glu-52 is disordered. 3 ANK repeats span residues Phe-45 to Ala-74, Phe-78 to Thr-106, and Thr-111 to Val-140.

It belongs to the CDKN2 cyclin-dependent kinase inhibitor family. As to quaternary structure, heterodimer with CDK4 or CDK6. Predominamt P16 complexes contained CDK6. Interacts with CDK4 (both 'T-172'-phosphorylated and non-phosphorylated forms); the interaction inhibits cyclin D-CDK4 kinase activity. Interacts with ISCO2. Expressed predominantly in lung and testis. In the testis, restricted to germ cells in the seminiferous epithelium. Not detected in premeiotic spermatogonia but high levels found in postmeiotic spermatids. In primary tumors, low levels detected in melanocytic hyperplasias. Higher levels found in non-metastatic and metastatic melanomas.

It is found in the cytoplasm. The protein localises to the nucleus. Acts as a negative regulator of the proliferation of normal cells by interacting strongly with CDK4 and CDK6. This inhibits their ability to interact with cyclins D and to phosphorylate the retinoblastoma protein. The sequence is that of Cyclin-dependent kinase inhibitor 2A from Monodelphis domestica (Gray short-tailed opossum).